A 1168-amino-acid chain; its full sequence is TBC1 domain family member 1 (1168 aa).

Serine 146 is modified (phosphoserine). Residues 203 to 238 (VSGSRGSESPRPNPPHAAPTGSQEPVRRPMRKSFSQ) form a disordered region. Serine 235 carries the post-translational modification Phosphoserine; by PKB/AKT1. Serine 237 is modified (phosphoserine). The 159-residue stretch at 246–404 (FRKELQDGGL…LHKLCERIEG (159 aa)) folds into the PID domain. At serine 503 the chain carries Phosphoserine. Threonine 505 carries the post-translational modification Phosphothreonine; by PKB/AKT1. Residues serine 507, serine 525, and serine 527 each carry the phosphoserine modification. Positions 532-542 (SSLSSTLSNTS) are enriched in low complexity. Disordered regions lie at residues 532–551 (SSLS…CEKE) and 564–587 (GSSE…LSPQ). 5 positions are modified to phosphoserine: serine 565, serine 566, serine 570, serine 571, and serine 585. At threonine 596 the chain carries Phosphothreonine. Serine 614 carries the phosphoserine modification. Serine 627 carries the post-translational modification Phosphoserine; by PKB/AKT1. Disordered stretches follow at residues 628-658 (VSTE…KTRR) and 678-717 (SSSR…KRTS). Residues 632–645 (TPHERKDFESKANH) show a composition bias toward basic and acidic residues. 2 positions are modified to phosphoserine: serine 695 and serine 941. The region spanning 800 to 994 (GVPRHHRGEI…RVFDMIFLQG (195 aa)) is the Rab-GAP TBC domain. Tyrosine 952 carries the phosphotyrosine modification. Threonine 1131 carries the phosphothreonine modification. Positions 1145–1159 (ELRRRSAEPSDREPE) are enriched in basic and acidic residues. The tract at residues 1145-1168 (ELRRRSAEPSDREPECTQPEPTGD) is disordered.

In terms of assembly, interacts with APPL2 (via BAR domain); interaction is dependent of TBC1D1 phosphorylation at Ser-235; interaction diminishes the phosphorylation of TBC1D1 at Thr-596, resulting in inhibition of SLC2A4/GLUT4 translocation and glucose uptake. Post-translationally, insulin-stimulated phosphorylation by AKT family kinases stimulates SLC2A4/GLUT4 translocation.

It localises to the nucleus. Its function is as follows. May act as a GTPase-activating protein for Rab family protein(s). May play a role in the cell cycle and differentiation of various tissues. Involved in the trafficking and translocation of GLUT4-containing vesicles and insulin-stimulated glucose uptake into cells. This is TBC1 domain family member 1 (TBC1D1) from Homo sapiens (Human).